The following is a 148-amino-acid chain: Lipoprotein MlpA (148 aa).

The N-terminal stretch at 1–17 is a signal peptide; that stretch reads MKIINILFCLFLLLLNS. Cysteine 18 carries the N-palmitoyl cysteine lipid modification. Cysteine 18 carries S-diacylglycerol cysteine lipidation. The tract at residues 26–58 is disordered; the sequence is LKNNAQQTKSRGKRDLTQKEATPEKPKSKEELL. Over residues 38–58 the composition is skewed to basic and acidic residues; sequence KRDLTQKEATPEKPKSKEELL.

Belongs to the Multicopy lipoprotein (Mlp) family.

It is found in the cell outer membrane. Its function is as follows. An outer membrane protein that may participate in pathogenesis. Some human Lyme disease patients have antibodies against this protein. The Mlp proteins probably undergo intragenic recombination, generating new alleles. The polypeptide is Lipoprotein MlpA (mlpA) (Borreliella burgdorferi (strain ATCC 35210 / DSM 4680 / CIP 102532 / B31) (Borrelia burgdorferi)).